The primary structure comprises 268 residues: Phosphate import ATP-binding protein PstB (268 aa).

Positions 22–263 (LAVRNLNFYY…PKQQQTQDYI (242 aa)) constitute an ABC transporter domain. 54–61 (GPSGCGKS) contacts ATP.

This sequence belongs to the ABC transporter superfamily. Phosphate importer (TC 3.A.1.7) family. In terms of assembly, the complex is composed of two ATP-binding proteins (PstB), two transmembrane proteins (PstC and PstA) and a solute-binding protein (PstS).

It is found in the cell inner membrane. It catalyses the reaction phosphate(out) + ATP + H2O = ADP + 2 phosphate(in) + H(+). Part of the ABC transporter complex PstSACB involved in phosphate import. Responsible for energy coupling to the transport system. The sequence is that of Phosphate import ATP-binding protein PstB from Gluconobacter oxydans (strain 621H) (Gluconobacter suboxydans).